Here is a 167-residue protein sequence, read N- to C-terminus: Large ribosomal subunit protein uL10 (167 aa).

The protein belongs to the universal ribosomal protein uL10 family. Part of the ribosomal stalk of the 50S ribosomal subunit. The N-terminus interacts with L11 and the large rRNA to form the base of the stalk. The C-terminus forms an elongated spine to which L12 dimers bind in a sequential fashion forming a multimeric L10(L12)X complex.

Its function is as follows. Forms part of the ribosomal stalk, playing a central role in the interaction of the ribosome with GTP-bound translation factors. This chain is Large ribosomal subunit protein uL10, found in Ligilactobacillus salivarius (strain UCC118) (Lactobacillus salivarius).